The following is a 989-amino-acid chain: Zinc finger SWIM domain-containing protein 4 (989 aa).

The disordered stretch occupies residues 1–32 (MEPPAAKRSRGCPAGPEERDAGAGAARGRGRP). The SWIM-type zinc finger occupies 139 to 176 (YHVSISFDRCKITSVSCGCDNRDLFYCAHVVALSLYRI).

The sequence is that of Zinc finger SWIM domain-containing protein 4 (ZSWIM4) from Homo sapiens (Human).